A 290-amino-acid polypeptide reads, in one-letter code: Protease HtpX (290 aa).

2 helical membrane-spanning segments follow: residues 4–24 and 36–56; these read IMLFLATNLAVLIIASITLKL and GSLLIFCAVFGFAGSLVSLFI. Position 142 (His-142) interacts with Zn(2+). Glu-143 is a catalytic residue. His-146 lines the Zn(2+) pocket. The next 2 helical transmembrane spans lie at 150–170 and 193–213; these read GDMVTLALIQGVVNTFVMFFA and FIATIFAELVLGILASIIVMW. Glu-219 contributes to the Zn(2+) binding site.

Belongs to the peptidase M48B family. It depends on Zn(2+) as a cofactor.

It localises to the cell inner membrane. The protein is Protease HtpX of Ectopseudomonas mendocina (strain ymp) (Pseudomonas mendocina).